The chain runs to 189 residues: UPF0301 protein PFL_5830 (189 aa).

The protein belongs to the UPF0301 (AlgH) family.

This Pseudomonas fluorescens (strain ATCC BAA-477 / NRRL B-23932 / Pf-5) protein is UPF0301 protein PFL_5830.